We begin with the raw amino-acid sequence, 341 residues long: Glyceraldehyde-3-phosphate dehydrogenase, cytosolic (341 aa).

NAD(+)-binding positions include Arg15–Ile16, Asp37, and Arg84. D-glyceraldehyde 3-phosphate-binding positions include Ser155–Thr157, Thr186, Thr215–Gly216, and Arg238. Cys156 functions as the Nucleophile in the catalytic mechanism. Residue Asn320 participates in NAD(+) binding.

This sequence belongs to the glyceraldehyde-3-phosphate dehydrogenase family. In terms of assembly, homotetramer.

The protein localises to the cytoplasm. The catalysed reaction is D-glyceraldehyde 3-phosphate + phosphate + NAD(+) = (2R)-3-phospho-glyceroyl phosphate + NADH + H(+). Its pathway is carbohydrate degradation; glycolysis; pyruvate from D-glyceraldehyde 3-phosphate: step 1/5. Functionally, key enzyme in glycolysis that catalyzes the first step of the pathway by converting D-glyceraldehyde 3-phosphate (G3P) into 3-phospho-D-glyceroyl phosphate. Essential for the maintenance of cellular ATP levels and carbohydrate metabolism. This chain is Glyceraldehyde-3-phosphate dehydrogenase, cytosolic (GAPC), found in Magnolia liliiflora (Mulan magnolia).